The following is a 255-amino-acid chain: Glucanase inhibitor protein 4 (255 aa).

The first 21 residues, 1-21 (MKSITTASFALILFGVGAASA), serve as a signal peptide directing secretion. One can recognise a Peptidase S1 domain in the interval 29-255 (VLGGGAVPSG…ESLGMDQLGH (227 aa)). A disulfide bond links cysteine 56 and cysteine 72. N-linked (GlcNAc...) asparagine glycans are attached at residues asparagine 90, asparagine 105, asparagine 110, and asparagine 160. Intrachain disulfides connect cysteine 180–cysteine 192 and cysteine 202–cysteine 235.

The protein belongs to the peptidase S1 family. As to quaternary structure, forms an apoplastic complex with host endoglucanases in tomato leaves during P.infestans infection.

The protein localises to the secreted. Functionally, secreted effector that suppresses host plant glucan elicitor-mediated defense responses. Targets host endoglucanases and inhibits the endoglucanase-mediated release of elicitor-active glucan oligosaccharides from P.infestans cell walls. This chain is Glucanase inhibitor protein 4, found in Phytophthora infestans (Potato late blight agent).